The primary structure comprises 158 residues: MSDNKVNLPLRNGVGIVVLNKDNKVFVAKRIDNQKNFWQMPQGGVDKGEDYLTAAYRELEEETSIKNVELIKECDGLISYELPKNLLGIIWKGKYRGQEQKWFIMRFLGQDNEIDIKTKHPEFSEWKWIDLENITDLVVDFKLHVYKDVKEKVKEILN.

Residues 9 to 151 (PLRNGVGIVV…KLHVYKDVKE (143 aa)) form the Nudix hydrolase domain. The short motif at 43 to 64 (GGVDKGEDYLTAAYRELEEETS) is the Nudix box element.

It belongs to the Nudix hydrolase family. RppH subfamily. The cofactor is a divalent metal cation.

Accelerates the degradation of transcripts by removing pyrophosphate from the 5'-end of triphosphorylated RNA, leading to a more labile monophosphorylated state that can stimulate subsequent ribonuclease cleavage. This Pelagibacter ubique (strain HTCC1062) protein is RNA pyrophosphohydrolase.